A 307-amino-acid chain; its full sequence is Ribonuclease Z (307 aa).

7 residues coordinate Zn(2+): His63, His65, Asp67, His68, His141, Asp212, and His270. Asp67 acts as the Proton acceptor in catalysis.

This sequence belongs to the RNase Z family. In terms of assembly, homodimer. Requires Zn(2+) as cofactor.

The catalysed reaction is Endonucleolytic cleavage of RNA, removing extra 3' nucleotides from tRNA precursor, generating 3' termini of tRNAs. A 3'-hydroxy group is left at the tRNA terminus and a 5'-phosphoryl group is left at the trailer molecule.. In terms of biological role, zinc phosphodiesterase, which displays some tRNA 3'-processing endonuclease activity. Probably involved in tRNA maturation, by removing a 3'-trailer from precursor tRNA. This chain is Ribonuclease Z, found in Bacillus mycoides (strain KBAB4) (Bacillus weihenstephanensis).